A 159-amino-acid chain; its full sequence is Transcriptional repressor NrdR (159 aa).

Residues 3 to 34 (CPFCRHDDTQVVDSRVSEDGAAIRRRRRCSAC) fold into a zinc finger. The 91-residue stretch at 49 to 139 (PAVVKKDGSR…VYRRFEDVSE (91 aa)) folds into the ATP-cone domain.

Belongs to the NrdR family. Requires Zn(2+) as cofactor.

In terms of biological role, negatively regulates transcription of bacterial ribonucleotide reductase nrd genes and operons by binding to NrdR-boxes. This is Transcriptional repressor NrdR from Burkholderia pseudomallei (strain 1106a).